Here is a 422-residue protein sequence, read N- to C-terminus: Serine--tRNA ligase (422 aa).

229-231 lines the L-serine pocket; it reads TAE. Residues 260–262 and Val-276 contribute to the ATP site; that span reads RRE. Glu-283 contacts L-serine. An ATP-binding site is contributed by 349–352; it reads EVTS. Thr-384 lines the L-serine pocket.

Belongs to the class-II aminoacyl-tRNA synthetase family. Type-1 seryl-tRNA synthetase subfamily. As to quaternary structure, homodimer. The tRNA molecule binds across the dimer.

The protein resides in the cytoplasm. The catalysed reaction is tRNA(Ser) + L-serine + ATP = L-seryl-tRNA(Ser) + AMP + diphosphate + H(+). It carries out the reaction tRNA(Sec) + L-serine + ATP = L-seryl-tRNA(Sec) + AMP + diphosphate + H(+). Its pathway is aminoacyl-tRNA biosynthesis; selenocysteinyl-tRNA(Sec) biosynthesis; L-seryl-tRNA(Sec) from L-serine and tRNA(Sec): step 1/1. Functionally, catalyzes the attachment of serine to tRNA(Ser). Is also able to aminoacylate tRNA(Sec) with serine, to form the misacylated tRNA L-seryl-tRNA(Sec), which will be further converted into selenocysteinyl-tRNA(Sec). The chain is Serine--tRNA ligase from Treponema denticola (strain ATCC 35405 / DSM 14222 / CIP 103919 / JCM 8153 / KCTC 15104).